A 206-amino-acid polypeptide reads, in one-letter code: Ribosomal RNA large subunit methyltransferase E (206 aa).

5 residues coordinate S-adenosyl-L-methionine: Gly60, Trp62, Asp80, Asp96, and Asp121. Lys161 acts as the Proton acceptor in catalysis.

The protein belongs to the class I-like SAM-binding methyltransferase superfamily. RNA methyltransferase RlmE family.

It localises to the cytoplasm. It catalyses the reaction uridine(2552) in 23S rRNA + S-adenosyl-L-methionine = 2'-O-methyluridine(2552) in 23S rRNA + S-adenosyl-L-homocysteine + H(+). Its function is as follows. Specifically methylates the uridine in position 2552 of 23S rRNA at the 2'-O position of the ribose in the fully assembled 50S ribosomal subunit. This is Ribosomal RNA large subunit methyltransferase E from Francisella tularensis subsp. novicida (strain U112).